Reading from the N-terminus, the 380-residue chain is Cytochrome b (380 aa).

4 helical membrane passes run 34 to 54 (FGSL…LLAA), 78 to 99 (WLIR…YLHI), 114 to 134 (WNTG…GYVL), and 179 to 199 (FFTL…IHLT). Heme b contacts are provided by H84 and H98. Residues H183 and H197 each coordinate heme b. H202 is an a ubiquinone binding site. Helical transmembrane passes span 227-247 (LKDI…ALFS), 289-309 (LGGV…PLLH), 321-341 (FSQL…WVGS), and 348-368 (FIII…ILFP).

Belongs to the cytochrome b family. As to quaternary structure, the cytochrome bc1 complex contains 11 subunits: 3 respiratory subunits (MT-CYB, CYC1 and UQCRFS1), 2 core proteins (UQCRC1 and UQCRC2) and 6 low-molecular weight proteins (UQCRH/QCR6, UQCRB/QCR7, UQCRQ/QCR8, UQCR10/QCR9, UQCR11/QCR10 and a cleavage product of UQCRFS1). This cytochrome bc1 complex then forms a dimer. Heme b serves as cofactor.

The protein localises to the mitochondrion inner membrane. Component of the ubiquinol-cytochrome c reductase complex (complex III or cytochrome b-c1 complex) that is part of the mitochondrial respiratory chain. The b-c1 complex mediates electron transfer from ubiquinol to cytochrome c. Contributes to the generation of a proton gradient across the mitochondrial membrane that is then used for ATP synthesis. The chain is Cytochrome b (MT-CYB) from Bugeranus carunculatus (Wattled crane).